The chain runs to 825 residues: Glycerol-3-phosphate acyltransferase (825 aa).

The short motif at 306-311 (CHRSHM) is the HXXXXD motif element. The tract at residues 802–825 (SASSSTEMEASTSSSQTAEETTQG) is disordered.

The protein belongs to the GPAT/DAPAT family.

It localises to the cell inner membrane. It carries out the reaction sn-glycerol 3-phosphate + an acyl-CoA = a 1-acyl-sn-glycero-3-phosphate + CoA. Its pathway is phospholipid metabolism; CDP-diacylglycerol biosynthesis; CDP-diacylglycerol from sn-glycerol 3-phosphate: step 1/3. This Pectobacterium atrosepticum (strain SCRI 1043 / ATCC BAA-672) (Erwinia carotovora subsp. atroseptica) protein is Glycerol-3-phosphate acyltransferase.